The chain runs to 105 residues: Flagellar transcriptional regulator FlhD (105 aa).

Belongs to the FlhD family. Homodimer; disulfide-linked. Forms a heterohexamer composed of two FlhC and four FlhD subunits. Each FlhC binds a FlhD dimer, forming a heterotrimer, and a hexamer assembles by dimerization of two heterotrimers.

The protein localises to the cytoplasm. In terms of biological role, functions in complex with FlhC as a master transcriptional regulator that regulates transcription of several flagellar and non-flagellar operons by binding to their promoter region. Activates expression of class 2 flagellar genes, including fliA, which is a flagellum-specific sigma factor that turns on the class 3 genes. Also regulates genes whose products function in a variety of physiological pathways. This is Flagellar transcriptional regulator FlhD from Nitrosomonas eutropha (strain DSM 101675 / C91 / Nm57).